The following is a 158-amino-acid chain: 2-C-methyl-D-erythritol 2,4-cyclodiphosphate synthase (158 aa).

Positions 9 and 11 each coordinate a divalent metal cation. 4-CDP-2-C-methyl-D-erythritol 2-phosphate-binding positions include 9 to 11 (DVH) and 35 to 36 (HS). An a divalent metal cation-binding site is contributed by histidine 43. 4-CDP-2-C-methyl-D-erythritol 2-phosphate is bound by residues 57–59 (DIG), 62–66 (FPDTD), 101–107 (AQAPKMA), 133–136 (TTTE), phenylalanine 140, and arginine 143.

This sequence belongs to the IspF family. As to quaternary structure, homotrimer. A divalent metal cation is required as a cofactor.

It catalyses the reaction 4-CDP-2-C-methyl-D-erythritol 2-phosphate = 2-C-methyl-D-erythritol 2,4-cyclic diphosphate + CMP. The protein operates within isoprenoid biosynthesis; isopentenyl diphosphate biosynthesis via DXP pathway; isopentenyl diphosphate from 1-deoxy-D-xylulose 5-phosphate: step 4/6. Involved in the biosynthesis of isopentenyl diphosphate (IPP) and dimethylallyl diphosphate (DMAPP), two major building blocks of isoprenoid compounds. Catalyzes the conversion of 4-diphosphocytidyl-2-C-methyl-D-erythritol 2-phosphate (CDP-ME2P) to 2-C-methyl-D-erythritol 2,4-cyclodiphosphate (ME-CPP) with a corresponding release of cytidine 5-monophosphate (CMP). This chain is 2-C-methyl-D-erythritol 2,4-cyclodiphosphate synthase, found in Vibrio cholerae serotype O1 (strain ATCC 39541 / Classical Ogawa 395 / O395).